Here is a 521-residue protein sequence, read N- to C-terminus: CD166 antigen (521 aa).

At Gly1–Lys465 the chain is on the extracellular side. 9 N-linked (GlcNAc...) asparagine glycosylation sites follow: Asn29, Asn33, Asn105, Asn203, Asn244, Asn299, Asn395, Asn418, and Asn437. An Ig-like V-type 2 domain is found at Pro63–His172. Cys95 and Cys158 are joined by a disulfide. 3 consecutive Ig-like C2-type domains span residues Pro183–Thr266, Asp271–Thr347, and Pro354–Ser439. Disulfide bonds link Cys208-Cys251, Cys292-Cys330, and Cys373-Cys423. The helical transmembrane segment at Leu466 to Leu487 threads the bilayer. Topologically, residues Tyr488 to Ala521 are cytoplasmic. The tract at residues Asn500–Ala521 is disordered. The segment covering Glu507–Ala521 has biased composition (basic and acidic residues).

Homodimer. Interacts (via extracellular domain) with CD6 (via extracellular domain). Homodimerization and interaction with CD6 involve the same region and cannot occur simultaneously. The affinity for CD6 is much higher than the affinity for self-association. Interacts (via glycosylated extracellular domain) with LGALS1 and LGALS3. Interaction with LGALS1 or LGALS3 inhibits interaction with CD6. In terms of processing, glycosylated.

The protein localises to the cell membrane. Its subcellular location is the cell projection. It localises to the axon. It is found in the dendrite. Functionally, cell adhesion molecule that mediates both heterotypic cell-cell contacts via its interaction with CD6, as well as homotypic cell-cell contacts. Promotes T-cell activation and proliferation via its interactions with CD6. Contributes to the formation and maturation of the immunological synapse via its interactions with CD6. Mediates homotypic interactions with cells that express ALCAM. Mediates attachment of dendritic cells onto endothelial cells via homotypic interaction. Inhibits endothelial cell migration and promotes endothelial tube formation via homotypic interactions. Required for normal organization of the lymph vessel network. Required for normal hematopoietic stem cell engraftment in the bone marrow. Plays a role in hematopoiesis; required for normal numbers of hematopoietic stem cells in bone marrow. Promotes in vitro osteoblast proliferation and differentiation. Promotes neurite extension, axon growth and axon guidance; axons grow preferentially on surfaces that contain ALCAM. Mediates outgrowth and pathfinding for retinal ganglion cell axons. The sequence is that of CD166 antigen (ALCAM) from Oryctolagus cuniculus (Rabbit).